The primary structure comprises 224 residues: Probable C-&gt;U-editing enzyme APOBEC-2 (224 aa).

A disordered region spans residues 1–25 (MAQKEEAAAAAEPASQNGEEVENLE). 2 residues coordinate Zn(2+): Glu-60 and His-98. Residues 64–169 (GRNKTFLCYV…PEIQAALRKL (106 aa)) form the CMP/dCMP-type deaminase domain. Glu-100 (proton donor) is an active-site residue. The Zn(2+) site is built by Cys-128 and Cys-131.

It belongs to the cytidine and deoxycytidylate deaminase family. As to quaternary structure, homotetramer. Zn(2+) is required as a cofactor.

It catalyses the reaction cytidine(6666) in apoB mRNA + H2O + H(+) = uridine(6666) in apoB mRNA + NH4(+). Functionally, probable C to U editing enzyme whose physiological substrate is not yet known. Does not display detectable apoB mRNA editing. Has a low intrinsic cytidine deaminase activity. May play a role in the epigenetic regulation of gene expression through the process of active DNA demethylation. In Bos taurus (Bovine), this protein is Probable C-&gt;U-editing enzyme APOBEC-2 (APOBEC2).